A 688-amino-acid polypeptide reads, in one-letter code: Lipase (688 aa).

A signal peptide spans 1–35; that stretch reads MKTRQNKYSIRKFSVGASSILIAALLFMGGGSAQA. The disordered stretch occupies residues 31–309; it reads GSAQAAEQQQ…KSAKQKQYKN (279 aa). Positions 36-302 are cleaved as a propeptide — removed in mature form; it reads AEQQQDKGTV…KNEDQTNKSA (267 aa). Residues 45–54 show a composition bias toward polar residues; the sequence is VENSTTQSIG. The span at 68–79 shows a compositional bias: low complexity; the sequence is NKNVNEKSNVNS. 3 stretches are compositionally biased toward basic and acidic residues: residues 84–95, 103–117, and 126–143; these read ESLHNETPKNED, SQNDNKSESVVEQNK, and HSEEKPQQEQVELEKHAS. Polar residues predominate over residues 144–172; the sequence is ENNQTLHSKAAQSNEDVKTKPSQLDNTAA. The span at 173 to 183 shows a compositional bias: basic and acidic residues; that stretch reads KQEDSQKENLS. The segment covering 184 to 211 has biased composition (polar residues); sequence KQDTQSSKTTDLLRATAQNQSKDSQSTE. Basic and acidic residues predominate over residues 240–267; that stretch reads SKEEPLKVDKQANPTTDKDKSSKNDKGS. The segment covering 274-289 has biased composition (polar residues); the sequence is LESNAVATTNKQSKQQ. Ser-418 serves as the catalytic Nucleophile. The active-site Charge relay system is Asp-609. Asp-647 is a Ca(2+) binding site. His-648 acts as the Charge relay system in catalysis. Positions 650, 655, and 658 each coordinate Ca(2+).

Belongs to the AB hydrolase superfamily. Lipase family.

The protein resides in the secreted. The catalysed reaction is a triacylglycerol + H2O = a diacylglycerol + a fatty acid + H(+). This chain is Lipase (lip), found in Staphylococcus epidermidis.